The following is a 402-amino-acid chain: Phosphoribulokinase, chloroplastic (402 aa).

The transit peptide at 1–51 (MAVCTVYTIPTTTHLGSSFNQNNKQVFFNYKRSSSSNNTLFTTRPSYVITC) directs the protein to the chloroplast. Cys-67 and Cys-106 are joined by a disulfide.

The protein belongs to the phosphoribulokinase family.

It localises to the plastid. The protein localises to the chloroplast. The catalysed reaction is D-ribulose 5-phosphate + ATP = D-ribulose 1,5-bisphosphate + ADP + H(+). It participates in carbohydrate biosynthesis; Calvin cycle. Its activity is regulated as follows. Light regulated via thioredoxin by reversible oxidation/reduction of sulfhydryl/disulfide groups. In Spinacia oleracea (Spinach), this protein is Phosphoribulokinase, chloroplastic.